The sequence spans 353 residues: UPF0283 membrane protein YcjF (353 aa).

3 helical membrane passes run 70–90 (MVMGGLALFGASVVGQGVQWT), 100–120 (VALGGCAAGALIIGAGVGSVV), and 213–233 (ESTLMIAVSPLALVDMAFIAW).

Belongs to the UPF0283 family.

The protein localises to the cell inner membrane. The chain is UPF0283 membrane protein YcjF from Escherichia coli O45:K1 (strain S88 / ExPEC).